The following is a 353-amino-acid chain: Nicotinate-nucleotide--dimethylbenzimidazole phosphoribosyltransferase (353 aa).

The active-site Proton acceptor is E318.

This sequence belongs to the CobT family.

The catalysed reaction is 5,6-dimethylbenzimidazole + nicotinate beta-D-ribonucleotide = alpha-ribazole 5'-phosphate + nicotinate + H(+). It participates in nucleoside biosynthesis; alpha-ribazole biosynthesis; alpha-ribazole from 5,6-dimethylbenzimidazole: step 1/2. Catalyzes the synthesis of alpha-ribazole-5'-phosphate from nicotinate mononucleotide (NAMN) and 5,6-dimethylbenzimidazole (DMB). The polypeptide is Nicotinate-nucleotide--dimethylbenzimidazole phosphoribosyltransferase (Desulforudis audaxviator (strain MP104C)).